The following is a 246-amino-acid chain: tRNA (guanine-N(1)-)-methyltransferase (246 aa).

Residues Gly-113 and 133 to 138 each bind S-adenosyl-L-methionine; that span reads IGDYVL.

This sequence belongs to the RNA methyltransferase TrmD family. Homodimer.

The protein resides in the cytoplasm. The enzyme catalyses guanosine(37) in tRNA + S-adenosyl-L-methionine = N(1)-methylguanosine(37) in tRNA + S-adenosyl-L-homocysteine + H(+). In terms of biological role, specifically methylates guanosine-37 in various tRNAs. This chain is tRNA (guanine-N(1)-)-methyltransferase, found in Yersinia enterocolitica serotype O:8 / biotype 1B (strain NCTC 13174 / 8081).